A 105-amino-acid polypeptide reads, in one-letter code: MYAVLVTGGKQYRVAQGEKLRIEKLEVEVGSEIKFDNILLLGDSDGIKIGDALSGAAVTATVLSQGRADKVRIIKFRRRKHHMKRQGHRQYYTEIEITGIAGGSK.

It belongs to the bacterial ribosomal protein bL21 family. In terms of assembly, part of the 50S ribosomal subunit. Contacts protein L20.

This protein binds to 23S rRNA in the presence of protein L20. In Stenotrophomonas maltophilia (strain R551-3), this protein is Large ribosomal subunit protein bL21.